Consider the following 654-residue polypeptide: Fimbrin-2 (654 aa).

4 Calponin-homology (CH) domains span residues 124-241, 269-372, 394-500, and 515-623; these read DSEK…KIQL, LPPE…QHRN, SREE…RYNI, and EITD…YWTL. Actin-binding stretches follow at residues 124–372 and 394–623; these read DSEK…QHRN and SREE…YWTL.

Interacts with F-actin.

Its subcellular location is the cytoplasm. The protein localises to the cytoskeleton. Cross-links actin filaments (F-actin). Stabilizes and prevents F-actin depolymerization mediated by profilin. May regulate actin cytoarchitecture, cell cycle, cell division, cell elongation and cytoplasmic tractus. In Arabidopsis thaliana (Mouse-ear cress), this protein is Fimbrin-2.